The following is a 176-amino-acid chain: Large ribosomal subunit protein uL10 (176 aa).

Belongs to the universal ribosomal protein uL10 family. In terms of assembly, part of the ribosomal stalk of the 50S ribosomal subunit. The N-terminus interacts with L11 and the large rRNA to form the base of the stalk. The C-terminus forms an elongated spine to which L12 dimers bind in a sequential fashion forming a multimeric L10(L12)X complex.

Its function is as follows. Forms part of the ribosomal stalk, playing a central role in the interaction of the ribosome with GTP-bound translation factors. The sequence is that of Large ribosomal subunit protein uL10 from Acaryochloris marina (strain MBIC 11017).